The chain runs to 208 residues: Ribosomal RNA large subunit methyltransferase E (208 aa).

Residues Gly-61, Trp-63, Asp-81, Asp-97, and Asp-122 each coordinate S-adenosyl-L-methionine. Catalysis depends on Lys-162, which acts as the Proton acceptor.

This sequence belongs to the class I-like SAM-binding methyltransferase superfamily. RNA methyltransferase RlmE family.

The protein resides in the cytoplasm. It carries out the reaction uridine(2552) in 23S rRNA + S-adenosyl-L-methionine = 2'-O-methyluridine(2552) in 23S rRNA + S-adenosyl-L-homocysteine + H(+). In terms of biological role, specifically methylates the uridine in position 2552 of 23S rRNA at the 2'-O position of the ribose in the fully assembled 50S ribosomal subunit. The chain is Ribosomal RNA large subunit methyltransferase E from Pseudomonas putida (strain W619).